The following is a 32-amino-acid chain: Ranatuerin-2Lb (32 aa).

Cysteines 27 and 32 form a disulfide.

Expressed by the skin glands.

The protein resides in the secreted. Antibacterial activity against Gram-positive bacterium S.aureus and Gram-negative bacterium E.coli. Has activity against C.albicans. The polypeptide is Ranatuerin-2Lb (Rana luteiventris (Columbia spotted frog)).